A 561-amino-acid chain; its full sequence is Nucleoprotein (561 aa).

The tract at residues 52–237 (VRKDKRTDSD…ISHEPSALNI (186 aa)) is binding site for the cap structure m7GTP. The interval 336–355 (SKPSAIQPPVRNGGSPDLKQ) is disordered. Mn(2+)-binding residues include aspartate 380 and glutamate 382. Residues glutamate 390, cysteine 497, histidine 500, and cysteine 521 each contribute to the Zn(2+) site. Residue aspartate 525 coordinates Mn(2+).

It belongs to the arenaviridae nucleocapsid protein family. In terms of assembly, homomultimerizes to form the nucleocapsid. Binds to viral genomic RNA. Interacts with glycoprotein G2. Interacts with protein Z; this interaction probably directs the encapsidated genome to budding sites. Interacts with protein L; this interaction does not interfere with Z-L interaction. Interacts with host IKBKE (via Protein kinase domain); the interaction inhibits IKBKE kinase activity.

The protein localises to the virion. Its subcellular location is the host cytoplasm. In terms of biological role, encapsidates the genome, protecting it from nucleases. The encapsidated genomic RNA is termed the nucleocapsid (NC). Serves as template for viral transcription and replication. The increased presence of protein N in host cell does not seem to trigger the switch from transcription to replication as observed in other negative strain RNA viruses. Through the interaction with host IKBKE, strongly inhibits the phosphorylation and nuclear translocation of host IRF3, a protein involved in interferon activation pathway, leading to the inhibition of interferon-beta and IRF3-dependent promoters activation. Also encodes a functional 3'-5' exoribonuclease that degrades preferentially dsRNA substrates and thereby participates in the suppression of interferon induction. This Cavia cutleri (Guinea pig) protein is Nucleoprotein.